The primary structure comprises 125 residues: Small ribosomal subunit protein bS6 (125 aa).

Positions 99-125 are disordered; sequence ASPMVKAREERKPLTEVENNDFEDAEE. A compositionally biased stretch (basic and acidic residues) spans 104-113; that stretch reads KAREERKPLT. The segment covering 116–125 has biased composition (acidic residues); sequence ENNDFEDAEE.

Belongs to the bacterial ribosomal protein bS6 family.

In terms of biological role, binds together with bS18 to 16S ribosomal RNA. The sequence is that of Small ribosomal subunit protein bS6 from Histophilus somni (strain 2336) (Haemophilus somnus).